Consider the following 45-residue polypeptide: Mu-conotoxin-like Cal 12.1.1d (45 aa).

4 disulfide bridges follow: cysteine 3-cysteine 16, cysteine 11-cysteine 28, cysteine 18-cysteine 33, and cysteine 27-cysteine 39. Tryptophan 17 is modified (6'-bromotryptophan). Position 21 is a 4-carboxyglutamate (glutamate 21). 4-hydroxyproline is present on proline 23. Tryptophan 37 and tryptophan 38 each carry 6'-bromotryptophan. 4-hydroxyproline is present on proline 40. A 6'-bromotryptophan modification is found at tryptophan 44.

Expressed by the venom duct.

Its subcellular location is the secreted. Its function is as follows. Mu-conotoxins block voltage-gated sodium channels. This toxin reversibly blocks voltage-gated sodium channel in cephalopods, with no alteration in the voltage dependence of sodium conductance or on the kinetics of inactivation. The protein is Mu-conotoxin-like Cal 12.1.1d of Californiconus californicus (California cone).